Consider the following 469-residue polypeptide: Adenosylhomocysteinase (469 aa).

Threonine 60, aspartate 135, and glutamate 195 together coordinate substrate. An NAD(+)-binding site is contributed by 196–198; sequence TTT. 2 residues coordinate substrate: lysine 225 and aspartate 229. Residues asparagine 230, 259-264, glutamate 282, asparagine 317, 338-340, and asparagine 383 contribute to the NAD(+) site; these read GYGDVG and IGH.

It belongs to the adenosylhomocysteinase family. The cofactor is NAD(+).

The protein localises to the cytoplasm. It carries out the reaction S-adenosyl-L-homocysteine + H2O = L-homocysteine + adenosine. It functions in the pathway amino-acid biosynthesis; L-homocysteine biosynthesis; L-homocysteine from S-adenosyl-L-homocysteine: step 1/1. Functionally, may play a key role in the regulation of the intracellular concentration of adenosylhomocysteine. The chain is Adenosylhomocysteinase from Maricaulis maris (strain MCS10) (Caulobacter maris).